The following is a 419-amino-acid chain: MIDLKLLREDPDVVRRSQLSRGEDPALVDALLTADTARRTAISTADSLRAEQKAASKGVGGASPEERPALLQRAKDLAEQVKAAEATQSETEAAFTAAHMAIPNVILDGVPAGGEDDYAVLEVVGEPRAIDNPKDHLELGESLGLIDMARGAKVAGSRFYFLTGQGALLQLGLLQLALRLAVDNGFIPMIPPVLVRPEVMAGTGFLGAHADEVYRLEADDLYLVGTSEVPMAGYHADEIVDLSEGPLRYAGWSSCFRREAGSYGKDTRGIIRVHQFDKVEGFVYCTPADAEAEHQRLLAWQREMLAQIEVPYRVIDVAAGDLGASAARKFDCEAWVPTQGTYRELTSTSNCTTFQARRLATRYRDANGKPQIAATLNGTLGTTRWLVSILENHQQPDGSVRVPAALVGFVGTEVLEPKG.

226 to 228 (TSE) is an L-serine binding site. Residues 257–259 (RRE) and valine 273 each bind ATP. Residue glutamate 280 participates in L-serine binding. 344-347 (ELTS) provides a ligand contact to ATP. Threonine 379 provides a ligand contact to L-serine.

Belongs to the class-II aminoacyl-tRNA synthetase family. Type-1 seryl-tRNA synthetase subfamily. Homodimer. The tRNA molecule binds across the dimer.

Its subcellular location is the cytoplasm. It carries out the reaction tRNA(Ser) + L-serine + ATP = L-seryl-tRNA(Ser) + AMP + diphosphate + H(+). The catalysed reaction is tRNA(Sec) + L-serine + ATP = L-seryl-tRNA(Sec) + AMP + diphosphate + H(+). Its pathway is aminoacyl-tRNA biosynthesis; selenocysteinyl-tRNA(Sec) biosynthesis; L-seryl-tRNA(Sec) from L-serine and tRNA(Sec): step 1/1. In terms of biological role, catalyzes the attachment of serine to tRNA(Ser). Is also able to aminoacylate tRNA(Sec) with serine, to form the misacylated tRNA L-seryl-tRNA(Sec), which will be further converted into selenocysteinyl-tRNA(Sec). The polypeptide is Serine--tRNA ligase (Mycobacterium marinum (strain ATCC BAA-535 / M)).